The chain runs to 103 residues: Flagellar hook-basal body complex protein FliE (103 aa).

Belongs to the FliE family.

Its subcellular location is the bacterial flagellum basal body. In Yersinia pestis, this protein is Flagellar hook-basal body complex protein FliE.